The chain runs to 296 residues: Zinc finger CCCH-type antiviral protein 1-like (296 aa).

The residue at position 2 (Ala-2) is an N-acetylalanine. 2 consecutive C3H1-type zinc fingers follow at residues 111-136 and 198-219; these read LCRRHMLGKCPHRDCWSTCSLSHDIH and VCKSFVRGECPFQPCKRSHQLI.

In Mus musculus (Mouse), this protein is Zinc finger CCCH-type antiviral protein 1-like (Zc3hav1l).